We begin with the raw amino-acid sequence, 261 residues long: Taurine import ATP-binding protein TauB (261 aa).

An ABC transporter domain is found at 4–233 (LTADRVSVRY…RWRAGDSARA (230 aa)). 38–45 (GPSGCGKT) serves as a coordination point for ATP.

Belongs to the ABC transporter superfamily. Taurine importer (TC 3.A.1.17.1) family. As to quaternary structure, the complex is composed of two ATP-binding proteins (TauB), two transmembrane proteins (TauC) and a solute-binding protein (TauA).

The protein resides in the cell inner membrane. The catalysed reaction is taurine(out) + ATP + H2O = taurine(in) + ADP + phosphate + H(+). Its function is as follows. Part of the ABC transporter complex TauABC involved in taurine import. Responsible for energy coupling to the transport system. The protein is Taurine import ATP-binding protein TauB of Chromobacterium violaceum (strain ATCC 12472 / DSM 30191 / JCM 1249 / CCUG 213 / NBRC 12614 / NCIMB 9131 / NCTC 9757 / MK).